A 474-amino-acid chain; its full sequence is tRNA-2-methylthio-N(6)-dimethylallyladenosine synthase (474 aa).

Positions 3-120 constitute an MTTase N-terminal domain; it reads QKLHIKTWGC…LPEMINQIRG (118 aa). [4Fe-4S] cluster-binding residues include C12, C49, C83, C157, C161, and C164. Positions 143–375 constitute a Radical SAM core domain; it reads KAEGPTAFVS…QQRINNQAAK (233 aa). Positions 378 to 441 constitute a TRAM domain; it reads RAMLGTEQRV…TNSLRGDVIR (64 aa).

Belongs to the methylthiotransferase family. MiaB subfamily. As to quaternary structure, monomer. Requires [4Fe-4S] cluster as cofactor.

It is found in the cytoplasm. It catalyses the reaction N(6)-dimethylallyladenosine(37) in tRNA + (sulfur carrier)-SH + AH2 + 2 S-adenosyl-L-methionine = 2-methylsulfanyl-N(6)-dimethylallyladenosine(37) in tRNA + (sulfur carrier)-H + 5'-deoxyadenosine + L-methionine + A + S-adenosyl-L-homocysteine + 2 H(+). Its function is as follows. Catalyzes the methylthiolation of N6-(dimethylallyl)adenosine (i(6)A), leading to the formation of 2-methylthio-N6-(dimethylallyl)adenosine (ms(2)i(6)A) at position 37 in tRNAs that read codons beginning with uridine. The chain is tRNA-2-methylthio-N(6)-dimethylallyladenosine synthase from Actinobacillus succinogenes (strain ATCC 55618 / DSM 22257 / CCUG 43843 / 130Z).